Here is a 445-residue protein sequence, read N- to C-terminus: C-terminal-binding protein 2 (445 aa).

An Asymmetric dimethylarginine modification is found at arginine 22. Residues serine 106, 186–191 (IGFGRT), aspartate 210, 243–249 (CNLNEHN), 270–272 (AAR), and aspartate 296 each bind NAD(+). Residue arginine 272 is part of the active site. The active site involves glutamate 301. Histidine 321 acts as the Proton donor in catalysis. Residue 321–324 (HTAW) participates in NAD(+) binding. A disordered region spans residues 414–445 (THNLPTVAHPSQAPSPNQPTKHGDNREHPNEQ). A Phosphoserine; by HIPK2 modification is found at serine 428. Residues 434–445 (KHGDNREHPNEQ) show a composition bias toward basic and acidic residues.

Belongs to the D-isomer specific 2-hydroxyacid dehydrogenase family. Interacts with HIPK2 and PNN. Interacts with the transcription factors ZNF217, BKLF, delta EF1/AREB6/ZEB, EVI-1 and Friend of GATA (FOG) via the consensus motif P-X-[DNS]-L-[STVA]. Also interacts with the C-terminus of adenovirus E1A protein. Can form a complex with BKLF on a CACCC-box oligonucleotide. Can form homodimers or heterodimers of CTBP1 and CTBP2. Interacts with NRIP1 and WIZ. Interacts with PRDM16; represses white adipose tissue (WAT)-specific genes expression. Interacts with MCRIP1. In terms of processing, phosphorylation by HIPK2 on Ser-428 induces proteasomal degradation. Found in all tissues except spleen and liver.

The protein localises to the nucleus. It is found in the synapse. Functionally, corepressor targeting diverse transcription regulators. Isoform 2 probably acts as a scaffold for specialized synapses. Functions in brown adipose tissue (BAT) differentiation. The polypeptide is C-terminal-binding protein 2 (Ctbp2) (Mus musculus (Mouse)).